A 446-amino-acid chain; its full sequence is N-succinylarginine dihydrolase (446 aa).

Substrate is bound by residues 21 to 30 (AGLSWGNVAS), N112, and 139 to 140 (HR). The active site involves E176. R216 is a binding site for substrate. H252 is a catalytic residue. Residues D254 and N364 each coordinate substrate. The active-site Nucleophile is C370.

The protein belongs to the succinylarginine dihydrolase family. As to quaternary structure, homodimer.

The catalysed reaction is N(2)-succinyl-L-arginine + 2 H2O + 2 H(+) = N(2)-succinyl-L-ornithine + 2 NH4(+) + CO2. Its pathway is amino-acid degradation; L-arginine degradation via AST pathway; L-glutamate and succinate from L-arginine: step 2/5. Catalyzes the hydrolysis of N(2)-succinylarginine into N(2)-succinylornithine, ammonia and CO(2). The sequence is that of N-succinylarginine dihydrolase from Marinobacter nauticus (strain ATCC 700491 / DSM 11845 / VT8) (Marinobacter aquaeolei).